The following is a 275-amino-acid chain: Glutamate 5-kinase (275 aa).

Lys17 provides a ligand contact to ATP. Substrate is bound by residues Ser57, Asp144, and Asn160. ATP-binding positions include 180–181 (SD) and 222–228 (TGGMLSK).

Belongs to the glutamate 5-kinase family.

The protein resides in the cytoplasm. It carries out the reaction L-glutamate + ATP = L-glutamyl 5-phosphate + ADP. Its pathway is amino-acid biosynthesis; L-proline biosynthesis; L-glutamate 5-semialdehyde from L-glutamate: step 1/2. Catalyzes the transfer of a phosphate group to glutamate to form L-glutamate 5-phosphate. This chain is Glutamate 5-kinase, found in Streptococcus pyogenes serotype M12 (strain MGAS2096).